The sequence spans 942 residues: Protein ZDS2 (942 aa).

Positions 1-28 are disordered; the sequence is MVLMEDMQNKDGHNTVENSSGGTDSNNN. Positions 15 to 28 are enriched in polar residues; sequence TVENSSGGTDSNNN. Residue S50 is modified to Phosphoserine. 5 disordered regions span residues 91-142, 483-541, 617-654, 682-728, and 788-817; these read SRNS…DDSI, SQES…NSSN, VVSS…KNSL, VKKE…DIDT, and SRDT…ISTL. Positions 99-122 are enriched in basic and acidic residues; the sequence is SSKESLQESLHEENIIRSEQKEEQ. Over residues 123–134 the composition is skewed to acidic residues; sequence GSEDNDAYEEGD. 3 stretches are compositionally biased toward low complexity: residues 483-497, 518-541, and 617-627; these read SQES…SNNS, SSSE…NSSN, and VVSSSESQPSK. A compositionally biased stretch (basic residues) spans 682–704; the sequence is VKKELKKKASHSSLSKFRKSPKK. Positions 807 to 816 are enriched in polar residues; sequence TSPTAPQIST.

It to yeast ZDS1/NRC1/CES1. Interacts with SKG6.

Acts as a negative regulator of polarized growth via an alternative mechanism to ZDS1. In heat-stressed cells appears to play a role in localizing BCY1 to the cytoplasm. Seems to interact with, and down-regulate, CDC42. Also acts as a suppressor of PKC1. May act as an integration point for distinct signaling pathways helping to maintain a balance among these different pathways. The sequence is that of Protein ZDS2 (ZDS2) from Saccharomyces cerevisiae (strain ATCC 204508 / S288c) (Baker's yeast).